The sequence spans 598 residues: Elongation factor 4 (598 aa).

Residues 3-185 (QHIRNFSIIA…MIVAQIPPPE (183 aa)) enclose the tr-type G domain. GTP-binding positions include 15–20 (DHGKST) and 132–135 (NKID).

Belongs to the TRAFAC class translation factor GTPase superfamily. Classic translation factor GTPase family. LepA subfamily.

The protein localises to the cell inner membrane. The catalysed reaction is GTP + H2O = GDP + phosphate + H(+). In terms of biological role, required for accurate and efficient protein synthesis under certain stress conditions. May act as a fidelity factor of the translation reaction, by catalyzing a one-codon backward translocation of tRNAs on improperly translocated ribosomes. Back-translocation proceeds from a post-translocation (POST) complex to a pre-translocation (PRE) complex, thus giving elongation factor G a second chance to translocate the tRNAs correctly. Binds to ribosomes in a GTP-dependent manner. The chain is Elongation factor 4 from Nitrosomonas europaea (strain ATCC 19718 / CIP 103999 / KCTC 2705 / NBRC 14298).